The sequence spans 363 residues: Histidinol-phosphate aminotransferase (363 aa).

Residue Lys220 is modified to N6-(pyridoxal phosphate)lysine.

This sequence belongs to the class-II pyridoxal-phosphate-dependent aminotransferase family. Histidinol-phosphate aminotransferase subfamily. Homodimer. Pyridoxal 5'-phosphate serves as cofactor.

It carries out the reaction L-histidinol phosphate + 2-oxoglutarate = 3-(imidazol-4-yl)-2-oxopropyl phosphate + L-glutamate. It functions in the pathway amino-acid biosynthesis; L-histidine biosynthesis; L-histidine from 5-phospho-alpha-D-ribose 1-diphosphate: step 7/9. The sequence is that of Histidinol-phosphate aminotransferase from Chlorobium chlorochromatii (strain CaD3).